Reading from the N-terminus, the 282-residue chain is UPF0759 protein YunF (282 aa).

The protein belongs to the UPF0759 family.

The protein is UPF0759 protein YunF (yunF) of Bacillus subtilis (strain 168).